The following is a 514-amino-acid chain: Carboxysome shell carbonic anhydrase (514 aa).

Positions Met1–Arg144 are N-terminal domain. A catalytic domain region spans residues Asp151–His397. Zn(2+) is bound at residue Cys173. The active-site Proton acceptor is Asp175. Zn(2+)-binding residues include His242 and Cys253. A C-terminal domain region spans residues Ala398–Ala514.

Belongs to the beta-class carbonic anhydrase family. CsoSCA subfamily. As to quaternary structure, homodimer, may form filaments. It depends on Zn(2+) as a cofactor.

Its subcellular location is the carboxysome. The catalysed reaction is hydrogencarbonate + H(+) = CO2 + H2O. Its activity is regulated as follows. Carbonic anhydrase activity is inhibited by ethoxyzolamide, dithiothreitol, cyanide, and divalent metal chelators dipicolinic acid and nitrilotriacetic acid. Functionally, reversible hydration of carbon dioxide. Essential for chemolithotrophic carbon dioxide fixation, supplies CO(2) to RuBisCO (ribulose bisphosphate carboxylase, cbbL-cbbS) in the carboxysome. There are estimated to be 40 CsoSCA dimers per carboxysome. Its function is as follows. Unlike beta-carboxysomes, alpha-carboxysomes (Cb) can form without cargo protein. CsoS2 is essential for Cb formation and is also capable of targeting foreign proteins to the Cb. The Cb shell assembles with the aid of CsoS2; CsoS1A, CsoS1B and CsoS1C form the majority of the shell while CsoS4A and CsoS4B form vertices. CsoS1D forms pseudohexamers that probably control metabolite flux into and out of the shell. This is Carboxysome shell carbonic anhydrase from Halothiobacillus neapolitanus (strain ATCC 23641 / c2) (Thiobacillus neapolitanus).